A 414-amino-acid polypeptide reads, in one-letter code: Succinylornithine transaminase (414 aa).

At Lys260 the chain carries N6-(pyridoxal phosphate)lysine.

It belongs to the class-III pyridoxal-phosphate-dependent aminotransferase family. AstC subfamily. Pyridoxal 5'-phosphate serves as cofactor.

The enzyme catalyses N(2)-succinyl-L-ornithine + 2-oxoglutarate = N-succinyl-L-glutamate 5-semialdehyde + L-glutamate. It participates in amino-acid degradation; L-arginine degradation via AST pathway; L-glutamate and succinate from L-arginine: step 3/5. In terms of biological role, catalyzes the transamination of N(2)-succinylornithine and alpha-ketoglutarate into N(2)-succinylglutamate semialdehyde and glutamate. Can also act as an acetylornithine aminotransferase. This is Succinylornithine transaminase from Yersinia pestis bv. Antiqua (strain Antiqua).